A 20-amino-acid chain; its full sequence is Protein PR-L1 (20 aa).

Belongs to the BetVI family.

The sequence is that of Protein PR-L1 from Lupinus luteus (European yellow lupine).